We begin with the raw amino-acid sequence, 179 residues long: Inner membrane-spanning protein YciB (179 aa).

5 helical membrane passes run 3–23 (FLFD…FGIY), 49–69 (PMQW…ILLH), 76–96 (WKPT…VIGW), 121–141 (VAWA…AYQF), and 149–169 (FKLF…SIWL).

This sequence belongs to the YciB family.

It is found in the cell inner membrane. Plays a role in cell envelope biogenesis, maintenance of cell envelope integrity and membrane homeostasis. The chain is Inner membrane-spanning protein YciB from Cupriavidus metallidurans (strain ATCC 43123 / DSM 2839 / NBRC 102507 / CH34) (Ralstonia metallidurans).